Reading from the N-terminus, the 186-residue chain is Large ribosomal subunit protein uL6 (186 aa).

Belongs to the universal ribosomal protein uL6 family. In terms of assembly, part of the 50S ribosomal subunit.

Functionally, this protein binds to the 23S rRNA, and is important in its secondary structure. It is located near the subunit interface in the base of the L7/L12 stalk, and near the tRNA binding site of the peptidyltransferase center. This Hyperthermus butylicus (strain DSM 5456 / JCM 9403 / PLM1-5) protein is Large ribosomal subunit protein uL6.